The sequence spans 564 residues: MAENQVDPKRNLPLYGAADESTSATDKEDEVENVRQNGSAPPIEEARESNEAPAADEYPHGLSLFFIVLAIMLATFIISLDQTIVGTAIPKITDQFHGLDKVSWYGSAYFMTFGGFQTSMGKAYRYFSLKTTFLVSLFIFEIGSLICGVAPNANALIAGRAIAGLGGAGMATGGFTIIAFSSEPKRRPLFTGLVGSAYGLSAVAGPLIGGAFSDKVSWRWCFYINLPVGGLAAVIILIFFHSPSGAKPVKAPLKEKILNMDLVGVSLLMCLIICFILALQYGGQTESWNSSKVIGLLVGFVAILVALIIWEYYLGERAMLVGRLLKKRALWAPSTYMFFFAGSYFILLYYLPTYFQSIDDTSPIGSGVRNLPMVVTFSIAAILAGAFVERTGIATPVMLVGAAIATIGTGLIYTWDIGTPAGKWIGYQILAAFGFVIPWLIPMNIAQANADAQDMSTVTAYIFLAQTLGGAFSVSAAQSAFVNTMLTKIKTTAPDVDPMALIATGATQIRATFPNDIHGVLLAYMAGLKATFAISVGMVGFACLMGLFTPWNRLHGSAGGAAFA.

Over residues 1-10 the composition is skewed to basic and acidic residues; it reads MAENQVDPKR. Residues 1–52 form a disordered region; sequence MAENQVDPKRNLPLYGAADESTSATDKEDEVENVRQNGSAPPIEEARESNEA. N-linked (GlcNAc...) asparagine glycosylation is present at asparagine 37. The next 7 membrane-spanning stretches (helical) occupy residues 60–80, 101–118, 131–151, 161–181, 192–212, 220–240, and 262–282; these read HGLSLFFIVLAIMLATFIISL, KVSWYGSAYFMTFGGFQT, TTFLVSLFIFEIGSLICGVAP, AIAGLGGAGMATGGFTIIAFS, GLVGSAYGLSAVAGPLIGGAF, WCFYINLPVGGLAAVIILIFF, and LVGVSLLMCLIICFILALQYG. Asparagine 289 carries an N-linked (GlcNAc...) asparagine glycan. The next 7 helical transmembrane spans lie at 293-313, 329-349, 368-388, 392-412, 425-445, 462-482, and 531-551; these read VIGLLVGFVAILVALIIWEYY, ALWAPSTYMFFFAGSYFILLY, VRNLPMVVTFSIAAILAGAFV, GIATPVMLVGAAIATIGTGLI, IGYQILAAFGFVIPWLIPMNI, IFLAQTLGGAFSVSAAQSAFV, and TFAISVGMVGFACLMGLFTPW.

Belongs to the major facilitator superfamily.

It is found in the membrane. MFS-type transporter; part of the gene cluster that mediates the biosynthesis of gregatin A, a fungal polyketide featuring an alkylated furanone core. The protein is MFS-type transporter grgE of Penicillium sp.